Here is a 152-residue protein sequence, read N- to C-terminus: MNEQKLCQAINLFVEVLLEGTEFVHREINQDVFKHISREQADLLKILKVKGPTSPGSLAMYQNVHKSAISNRLKKLLEKGLVQWDDCPEKSDRRSKLINITPSGEHILEELDSAIFNALKPLIDDIDEEHLHSIIEIFTILKSKFKGGDSAE.

The 141-residue stretch at 3 to 143 folds into the HTH marR-type domain; sequence EQKLCQAINL…IIEIFTILKS (141 aa). A DNA-binding region (H-T-H motif) is located at residues 55–78; the sequence is PGSLAMYQNVHKSAISNRLKKLLE.

This is an uncharacterized protein from Bacillus subtilis (strain 168).